The primary structure comprises 466 residues: Asparagine--tRNA ligase (466 aa).

It belongs to the class-II aminoacyl-tRNA synthetase family. In terms of assembly, homodimer.

It is found in the cytoplasm. The enzyme catalyses tRNA(Asn) + L-asparagine + ATP = L-asparaginyl-tRNA(Asn) + AMP + diphosphate + H(+). The polypeptide is Asparagine--tRNA ligase (Xylella fastidiosa (strain Temecula1 / ATCC 700964)).